The following is a 111-amino-acid chain: UPF0060 membrane protein Krad_3114 (111 aa).

Transmembrane regions (helical) follow at residues 7–27, 33–53, 62–82, and 88–108; these read IALF…VWQG, GLAW…AATL, VLAA…AVVD, and RFDV…MYAP.

Belongs to the UPF0060 family.

The protein localises to the cell membrane. This is UPF0060 membrane protein Krad_3114 from Kineococcus radiotolerans (strain ATCC BAA-149 / DSM 14245 / SRS30216).